Reading from the N-terminus, the 164-residue chain is 3-isopropylmalate dehydratase small subunit (164 aa).

It belongs to the LeuD family. LeuD type 2 subfamily. In terms of assembly, heterodimer of LeuC and LeuD.

It carries out the reaction (2R,3S)-3-isopropylmalate = (2S)-2-isopropylmalate. It functions in the pathway amino-acid biosynthesis; L-leucine biosynthesis; L-leucine from 3-methyl-2-oxobutanoate: step 2/4. Catalyzes the isomerization between 2-isopropylmalate and 3-isopropylmalate, via the formation of 2-isopropylmaleate. The chain is 3-isopropylmalate dehydratase small subunit from Syntrophus aciditrophicus (strain SB).